Reading from the N-terminus, the 281-residue chain is 18S rRNA (guanine-N(7))-methyltransferase (281 aa).

The segment covering 212 to 231 (LPKGLTESQDADQASESMFT) has biased composition (polar residues). Positions 212–281 (LPKGLTESQD…YTGRKRKPRF (70 aa)) are disordered. A compositionally biased stretch (basic and acidic residues) spans 242 to 256 (RDLVKKSREWVLEKK).

This sequence belongs to the class I-like SAM-binding methyltransferase superfamily. BUD23/WBSCR22 family. Heterodimer with TRMT112; this heterodimerization is necessary for the metabolic stability and activity of the catalytic subunit BUD23. Interacts with GRIP1. In terms of processing, may be ubiquitinated and targeted to degradation in response to pro-inflammatory cytokine signaling.

It localises to the nucleus. It is found in the nucleoplasm. The protein localises to the cytoplasm. Its subcellular location is the perinuclear region. The enzyme catalyses a guanosine in 18S rRNA + S-adenosyl-L-methionine = an N(7)-methylguanosine in 18S rRNA + S-adenosyl-L-homocysteine. Functionally, S-adenosyl-L-methionine-dependent methyltransferase that specifically methylates the N(7) position of a guanine in 18S rRNA. Requires the methyltransferase adapter protein TRM112 for full rRNA methyltransferase activity. Involved in the pre-rRNA processing steps leading to small-subunit rRNA production independently of its RNA-modifying catalytic activity. Important for biogenesis end export of the 40S ribosomal subunit independent on its methyltransferase activity. Locus-specific steroid receptor coactivator. Potentiates transactivation by glucocorticoid (NR3C1), mineralocorticoid (NR3C2), androgen (AR) and progesterone (PGR) receptors. Required for the maintenance of open chromatin at the TSC22D3/GILZ locus to facilitate NR3C1 loading on the response elements. Required for maintenance of dimethylation on histone H3 'Lys-79' (H3K79me2), although direct histone methyltransferase activity is not observed in vitro. The sequence is that of 18S rRNA (guanine-N(7))-methyltransferase from Mus musculus (Mouse).